Here is a 388-residue protein sequence, read N- to C-terminus: S-adenosylmethionine synthase (388 aa).

Residue His16 coordinates ATP. Asp18 serves as a coordination point for Mg(2+). K(+) is bound at residue Glu44. Residues Glu57 and Gln100 each coordinate L-methionine. Residues 100 to 110 (QSPDIAQGVDK) are flexible loop. ATP contacts are provided by residues 167–169 (DAK), 233–234 (RF), Asp242, 248–249 (RK), Ala265, and Lys269. An L-methionine-binding site is contributed by Asp242. Lys273 is a binding site for L-methionine.

The protein belongs to the AdoMet synthase family. In terms of assembly, homotetramer; dimer of dimers. The cofactor is Mg(2+). It depends on K(+) as a cofactor.

The protein resides in the cytoplasm. It catalyses the reaction L-methionine + ATP + H2O = S-adenosyl-L-methionine + phosphate + diphosphate. Its pathway is amino-acid biosynthesis; S-adenosyl-L-methionine biosynthesis; S-adenosyl-L-methionine from L-methionine: step 1/1. Its function is as follows. Catalyzes the formation of S-adenosylmethionine (AdoMet) from methionine and ATP. The overall synthetic reaction is composed of two sequential steps, AdoMet formation and the subsequent tripolyphosphate hydrolysis which occurs prior to release of AdoMet from the enzyme. The sequence is that of S-adenosylmethionine synthase from Polynucleobacter necessarius subsp. necessarius (strain STIR1).